The chain runs to 346 residues: Probable long-chain-alcohol O-fatty-acyltransferase 6 (346 aa).

The next 8 helical transmembrane spans lie at 7–27 (LFIQ…YLTP), 36–56 (LLSV…FSTV), 59–79 (SFTI…LFAL), 116–136 (FPKW…LQAY), 146–166 (FLLG…LTLI), 228–248 (FFAI…LYFY), 255–275 (TWEV…EVAL), and 289–309 (PAVS…WLFS).

It belongs to the wax synthase family.

It is found in the membrane. The catalysed reaction is a long chain fatty alcohol + a fatty acyl-CoA = a wax ester + CoA. Functionally, catalyzes the final step in the synthesis of long-chain linear esters (waxes). The protein is Probable long-chain-alcohol O-fatty-acyltransferase 6 (AT6) of Arabidopsis thaliana (Mouse-ear cress).